The chain runs to 213 residues: MNFKYSFIFLFFIQLAIRYNNAKITVDTICKGGKLIQMSNHYECKCPSGYALKTENTCEPIVKCDKLENINKVCGEYSICINQGNFGLEKAFVCMCTNGYMLSQNICKPTRCYNYECNAGKCILDSINPNNPVCSCDIGKILQNGKCTGTGETKCLLKCKAAEECKLTGKHYECVSKPQAPGTGSETPSNSSFMNGMSIISIIALLVIYVIVM.

The N-terminal stretch at 1 to 28 (MNFKYSFIFLFFIQLAIRYNNAKITVDT) is a signal peptide. One can recognise an EGF-like 1; truncated domain in the interval 30 to 59 (CKGGKLIQMSNHYECKCPSGYALKTENTCE). 2 EGF-like domains span residues 60 to 108 (PIVK…NICK) and 108 to 148 (KPTR…GKCT). Cystine bridges form between C64–C80, C74–C94, C96–C107, C112–C122, C117–C134, and C136–C147. Residues 151–175 (GETKCLLKCKAAEECKLTGKHYECV) enclose the EGF-like 4; truncated domain. N190 carries GPI-anchor amidated asparagine lipidation. N190 is a glycosylation site (N-linked (GlcNAc...) asparagine). Positions 191–213 (SSFMNGMSIISIIALLVIYVIVM) are cleaved as a propeptide — removed in mature form.

Its subcellular location is the cell membrane. This is 24 kDa ookinete surface protein from Plasmodium berghei (strain Anka).